A 99-amino-acid polypeptide reads, in one-letter code: Small ribosomal subunit protein bS20 (99 aa).

This sequence belongs to the bacterial ribosomal protein bS20 family.

Binds directly to 16S ribosomal RNA. The chain is Small ribosomal subunit protein bS20 from Thermotoga neapolitana (strain ATCC 49049 / DSM 4359 / NBRC 107923 / NS-E).